A 384-amino-acid polypeptide reads, in one-letter code: Branched-chain-amino-acid aminotransferase 1, mitochondrial (384 aa).

The N-terminal 18 residues, 1 to 18, are a transit peptide targeting the mitochondrion; that stretch reads MALRRCLPQYSTTSSYLS. Lys231 carries the post-translational modification N6-(pyridoxal phosphate)lysine.

Belongs to the class-IV pyridoxal-phosphate-dependent aminotransferase family. It depends on pyridoxal 5'-phosphate as a cofactor.

The protein localises to the mitochondrion. The catalysed reaction is L-leucine + 2-oxoglutarate = 4-methyl-2-oxopentanoate + L-glutamate. It carries out the reaction L-isoleucine + 2-oxoglutarate = (S)-3-methyl-2-oxopentanoate + L-glutamate. It catalyses the reaction L-valine + 2-oxoglutarate = 3-methyl-2-oxobutanoate + L-glutamate. The protein operates within amino-acid degradation; L-leucine degradation; 4-methyl-2-oxopentanoate from L-leucine (aminotransferase route): step 1/1. It participates in amino-acid degradation; L-valine degradation. Converts 2-oxo acids to branched-chain amino acids. Acts on leucine, isoleucine and valine. The polypeptide is Branched-chain-amino-acid aminotransferase 1, mitochondrial (BCAT1) (Arabidopsis thaliana (Mouse-ear cress)).